The following is a 286-amino-acid chain: Small ribosomal subunit protein uS2 (286 aa).

Residues 257–286 (KDNKSNKSNTINADENIKESDLIGGSNNEG) are disordered.

It belongs to the universal ribosomal protein uS2 family.

The polypeptide is Small ribosomal subunit protein uS2 (Ehrlichia ruminantium (strain Gardel)).